A 94-amino-acid chain; its full sequence is Large ribosomal subunit protein bL25 (94 aa).

It belongs to the bacterial ribosomal protein bL25 family. Part of the 50S ribosomal subunit; part of the 5S rRNA/L5/L18/L25 subcomplex. Contacts the 5S rRNA. Binds to the 5S rRNA independently of L5 and L18.

This is one of the proteins that binds to the 5S RNA in the ribosome where it forms part of the central protuberance. The sequence is that of Large ribosomal subunit protein bL25 from Pectobacterium carotovorum subsp. carotovorum (strain PC1).